A 491-amino-acid polypeptide reads, in one-letter code: Monodehydroascorbate reductase 5, chlorplastic (491 aa).

The N-terminal 42 residues, 1-42 (MASTAAAASSQGCISWALRQRGLGGGGARAVPVLPRRRFCVS), are a transit peptide targeting the chloroplast. FAD is bound by residues 61–64 (GGNA), E88, R95, K100, and 194–195 (RD). NAD(+)-binding positions include 217–223 (GGYIGME), E241, R247, and G306. 219-223 (YIGME) contacts NADP(+). Positions 247 and 306 each coordinate NADP(+). D344 provides a ligand contact to FAD. Residue 360–361 (EH) coordinates NAD(+). 360 to 361 (EH) contributes to the NADP(+) binding site. V362 contacts FAD. R366 is a binding site for L-ascorbate. Y391 lines the FAD pocket. Y391 lines the NAD(+) pocket. NADP(+) is bound at residue Y391. L-ascorbate is bound at residue R393.

Belongs to the FAD-dependent oxidoreductase family. FAD is required as a cofactor.

The protein resides in the plastid. The protein localises to the chloroplast. The catalysed reaction is 2 monodehydro-L-ascorbate radical + NADH + H(+) = 2 L-ascorbate + NAD(+). Catalyzes the conversion of monodehydroascorbate to ascorbate, oxidizing NADH in the process. Ascorbate is a major antioxidant against reactive oxygen species (ROS) and nitric oxide (NO). In Oryza sativa subsp. japonica (Rice), this protein is Monodehydroascorbate reductase 5, chlorplastic.